The sequence spans 94 residues: Small ribosomal subunit protein uS19 (94 aa).

This sequence belongs to the universal ribosomal protein uS19 family.

Protein S19 forms a complex with S13 that binds strongly to the 16S ribosomal RNA. The chain is Small ribosomal subunit protein uS19 from Clostridium botulinum (strain Langeland / NCTC 10281 / Type F).